Here is a 147-residue protein sequence, read N- to C-terminus: Microsomal glutathione S-transferase 2 (147 aa).

A run of 3 helical transmembrane segments spans residues 6–26 (SLLA…AWRV), 62–82 (VFIV…AACL), and 107–127 (GFRL…LGVA).

As to quaternary structure, homotrimer.

The protein localises to the endoplasmic reticulum membrane. The protein resides in the microsome membrane. It carries out the reaction RX + glutathione = an S-substituted glutathione + a halide anion + H(+). It catalyses the reaction 1-chloro-2,4-dinitrobenzene + glutathione = 2,4-dinitrophenyl-S-glutathione + chloride + H(+). The catalysed reaction is leukotriene C4 = leukotriene A4 + glutathione. The enzyme catalyses (5S)-hydroperoxy-(6E,8Z,11Z,14Z)-eicosatetraenoate + 2 glutathione = (5S)-hydroxy-(6E,8Z,11Z,14Z)-eicosatetraenoate + glutathione disulfide + H2O. Its activity is regulated as follows. Each monomer binds on GSH molecule but only one subunit is catalytically active. Functionally, catalyzes several different glutathione-dependent reactions. Catalyzes the glutathione-dependent reduction of lipid hydroperoxides, such as 5-HPETE. Has glutathione transferase activity, toward xenobiotic electrophiles, such as 1-chloro-2, 4-dinitrobenzene (CDNB). Also catalyzes the conjugation of leukotriene A4 with reduced glutathione to form leukotriene C4 (LTC4). Involved in oxidative DNA damage induced by ER stress and anticancer agents by activating LTC4 biosynthetic machinery in nonimmune cells. This is Microsomal glutathione S-transferase 2 from Mus musculus (Mouse).